The chain runs to 367 residues: Protein P39 (367 aa).

Coiled coils occupy residues arginine 165–glutamine 202 and glutamate 235–leucine 308.

In terms of biological role, might be involved in virion assembly and vector-mediated transmission of the virus. In Peanut clump virus (isolate 87/TGTA2) (PCV), this protein is Protein P39.